The primary structure comprises 423 residues: Innexin eat-5 (423 aa).

Helical transmembrane passes span Tyr-25–Ala-41, Pro-102–Leu-122, Ile-277–Ile-297, and His-341–Leu-361.

This sequence belongs to the pannexin family. As to quaternary structure, heterooligomer of eat-5 and another innexin. In terms of tissue distribution, expressed in pharyngeal muscles.

The protein resides in the cell membrane. It localises to the cell junction. The protein localises to the gap junction. Structural component of the gap junctions. Required for synchronized pharyngeal muscle contractions. The polypeptide is Innexin eat-5 (eat-5) (Caenorhabditis elegans).